The sequence spans 360 residues: (+)-6a-hydroxymaackiain 3-O-methyltransferase 1 (360 aa).

S-adenosyl-L-methionine contacts are provided by residues 202 to 205, Asp226, 226 to 227, 246 to 247, and Lys260; these read VAGG, DQ, and DM. Residue His264 is the Proton acceptor of the active site.

Belongs to the class I-like SAM-binding methyltransferase superfamily. Cation-independent O-methyltransferase family. COMT subfamily.

The catalysed reaction is (+)-6a-hydroxymaackiain + S-adenosyl-L-methionine = (+)-pisatin + S-adenosyl-L-homocysteine + H(+). It catalyses the reaction a 4'-hydroxyisoflavone + S-adenosyl-L-methionine = a 4'-methoxyisoflavone + S-adenosyl-L-homocysteine + H(+). In terms of biological role, methyltransferase involved in the phytoalexin pisatin biosynthesis. Has both 3- and 4'-O-methyltransferase activities. Can use (+)-6a-hydroxymaackiain, 2,7,4'-trihydroxyisoflavanone and with much less activity (+)-medicarpin as substrates, but not (-)-6a-hydroxymaackiain, daidzein, formononetin or isoliquiritigenin. May be involved in formononetin biosynthesis. The polypeptide is (+)-6a-hydroxymaackiain 3-O-methyltransferase 1 (HMM1) (Pisum sativum (Garden pea)).